Reading from the N-terminus, the 566-residue chain is Nitrate/nitrite sensor protein NarQ (566 aa).

The Cytoplasmic portion of the chain corresponds to 1–13; sequence MIVKRPVSASLAR. The helical transmembrane segment at 14 to 34 threads the bilayer; the sequence is AFFYIVLLSILSTGIALLTLA. Topologically, residues 35-146 are periplasmic; it reads SSLRDAEAIN…LALQHYAERK (112 aa). The helical transmembrane segment at 147–167 threads the bilayer; the sequence is MLLVVAISLAGGIGIFTLVFF. Residues 168–566 lie on the Cytoplasmic side of the membrane; the sequence is TLRRIRHQVV…SAEGEESQLM (399 aa). An HAMP domain is found at 174 to 227; that stretch reads HQVVAPLNQLVTASQRIEHGQFDSPPLDTNLPNELGLLAKTFNQMSSELHKLYR. The 196-residue stretch at 364–559 folds into the Histidine kinase domain; sequence TIARELHDSL…LVSISFRSAE (196 aa). A Phosphohistidine; by autocatalysis modification is found at His-370.

Its subcellular location is the cell inner membrane. The enzyme catalyses ATP + protein L-histidine = ADP + protein N-phospho-L-histidine.. In terms of biological role, acts as a sensor for nitrate/nitrite and transduces signal of nitrate/nitrite availability to the NarL/NarP proteins. NarQ probably activates NarL and NarP by phosphorylation. NarQ probably negatively regulates the NarL protein by dephosphorylation. This Escherichia coli (strain K12) protein is Nitrate/nitrite sensor protein NarQ (narQ).